The following is a 266-amino-acid chain: Type III pantothenate kinase (266 aa).

Residue 9 to 16 coordinates ATP; the sequence is DAGNSRIK. Residues Y96 and 103–106 contribute to the substrate site; that span reads GSDR. D105 acts as the Proton acceptor in catalysis. Residue T129 participates in ATP binding. T189 provides a ligand contact to substrate.

It belongs to the type III pantothenate kinase family. In terms of assembly, homodimer. It depends on NH4(+) as a cofactor. K(+) is required as a cofactor.

It is found in the cytoplasm. The enzyme catalyses (R)-pantothenate + ATP = (R)-4'-phosphopantothenate + ADP + H(+). It participates in cofactor biosynthesis; coenzyme A biosynthesis; CoA from (R)-pantothenate: step 1/5. In terms of biological role, catalyzes the phosphorylation of pantothenate (Pan), the first step in CoA biosynthesis. This Burkholderia cenocepacia (strain ATCC BAA-245 / DSM 16553 / LMG 16656 / NCTC 13227 / J2315 / CF5610) (Burkholderia cepacia (strain J2315)) protein is Type III pantothenate kinase.